Here is a 449-residue protein sequence, read N- to C-terminus: KICSTOR subunit 2 (449 aa).

It belongs to the KICS2 family. In terms of assembly, may be part of the KICSTOR complex.

Its subcellular location is the lysosome membrane. In terms of biological role, as part of the KICSTOR complex may function in the amino acid-sensing branch of the TORC1 signaling pathway. The polypeptide is KICSTOR subunit 2 (kics2) (Danio rerio (Zebrafish)).